A 465-amino-acid chain; its full sequence is Putative mannose-1-phosphate guanylyltransferase (465 aa).

The protein belongs to the mannose-6-phosphate isomerase type 2 family.

The enzyme catalyses alpha-D-mannose 1-phosphate + GTP + H(+) = GDP-alpha-D-mannose + diphosphate. It participates in nucleotide-sugar biosynthesis; GDP-alpha-D-mannose biosynthesis; GDP-alpha-D-mannose from alpha-D-mannose 1-phosphate (GTP route): step 1/1. The protein operates within bacterial outer membrane biogenesis; LPS O-antigen biosynthesis. This is Putative mannose-1-phosphate guanylyltransferase (rfbA) from Vibrio cholerae serotype O1 (strain ATCC 39315 / El Tor Inaba N16961).